The sequence spans 640 residues: 1-deoxy-D-xylulose-5-phosphate synthase (640 aa).

Thiamine diphosphate-binding positions include His-75 and 117 to 119; that span reads GHA. Asp-146 serves as a coordination point for Mg(2+). Thiamine diphosphate-binding positions include 147–148, Asn-175, and Glu-370; that span reads AA. Asn-175 contributes to the Mg(2+) binding site.

It belongs to the transketolase family. DXPS subfamily. As to quaternary structure, homodimer. It depends on Mg(2+) as a cofactor. The cofactor is thiamine diphosphate.

The catalysed reaction is D-glyceraldehyde 3-phosphate + pyruvate + H(+) = 1-deoxy-D-xylulose 5-phosphate + CO2. It functions in the pathway metabolic intermediate biosynthesis; 1-deoxy-D-xylulose 5-phosphate biosynthesis; 1-deoxy-D-xylulose 5-phosphate from D-glyceraldehyde 3-phosphate and pyruvate: step 1/1. Its function is as follows. Catalyzes the acyloin condensation reaction between C atoms 2 and 3 of pyruvate and glyceraldehyde 3-phosphate to yield 1-deoxy-D-xylulose-5-phosphate (DXP). This chain is 1-deoxy-D-xylulose-5-phosphate synthase, found in Chlamydia trachomatis serovar D (strain ATCC VR-885 / DSM 19411 / UW-3/Cx).